We begin with the raw amino-acid sequence, 96 residues long: Protein transport protein Sec61 subunit beta (96 aa).

The segment covering 1–17 (MPGPTPSGTNVGSSGRS) has biased composition (polar residues). Residues 1–54 (MPGPTPSGTNVGSSGRSPSKAVAARAAGSTVRQRKNASCGTRSAGRTTSAGTGG) form a disordered region. Pro-2 carries the post-translational modification N-acetylproline. Residues 2–70 (PGPTPSGTNV…EDSPGLKVGP (69 aa)) lie on the Cytoplasmic side of the membrane. Ser-7 is subject to Phosphoserine. The residue at position 9 (Thr-9) is a Phosphothreonine. Phosphoserine occurs at positions 13, 14, and 17. Residue Cys-39 is the site of S-palmitoyl cysteine attachment. Low complexity predominate over residues 40-50 (GTRSAGRTTSA). The helical transmembrane segment at 71 to 91 (VPVLVMSLLFIAAVFMLHIWG) threads the bilayer.

This sequence belongs to the SEC61-beta family. The SEC61 channel-forming translocon complex consists of channel-forming core components SEC61A1, SEC61B and SEC61G and different auxiliary components such as SEC62 and SEC63. The SEC61 channel associates with the multi-pass translocon (MPT) complex. Interacts with TRAM1.

It localises to the endoplasmic reticulum membrane. Functionally, component of SEC61 channel-forming translocon complex that mediates transport of signal peptide-containing precursor polypeptides across the endoplasmic reticulum (ER). Forms a ribosome receptor and a gated pore in the ER membrane, both functions required for cotranslational translocation of nascent polypeptides. The SEC61 channel is also involved in ER membrane insertion of transmembrane proteins: it mediates membrane insertion of the first few transmembrane segments of proteins, while insertion of subsequent transmembrane regions of multi-pass membrane proteins is mediated by the multi-pass translocon (MPT) complex. The SEC61 channel cooperates with the translocating protein TRAM1 to import nascent proteins into the ER. Required for PKD1/Polycystin-1 biogenesis. The chain is Protein transport protein Sec61 subunit beta from Mus musculus (Mouse).